We begin with the raw amino-acid sequence, 351 residues long: MAQVINTNSLSLMAQNNLNKSQSSLGTAIERLSSGLRINSAKDDAAGQAISNRFTANIKGLTQASRNANDGISLAQTTEGALNEVNDNLQNIRRLTVQAQNGSNSTSDLKSIQDEITQRLSEINRISEQTDFNGVKVLSSDQKLTIQVGANDGETTDIDLKKIDAKQLGMDTFDVTTKSAKAGAEIATGTKITVDSDATKQADADVTGLAKGQTLVSGTDADGKSAYFIATKDDATGDVAYTKAKVADDGKVTDSGTDAGVKNPLATLDKALAQVDGLRSSLGAVQNRFDSVINNLNSTVNNLSASQSRIQDADYATEVSNMSRANILQQAGTSVLAQANQSTQNVLSLLR.

The protein belongs to the bacterial flagellin family.

It localises to the secreted. The protein resides in the bacterial flagellum. Functionally, flagellin is the subunit protein which polymerizes to form the filaments of bacterial flagella. This Serratia marcescens protein is Flagellin (fliC).